The following is a 126-amino-acid chain: Large ribosomal subunit protein bL12 (126 aa).

Belongs to the bacterial ribosomal protein bL12 family. As to quaternary structure, homodimer. Part of the ribosomal stalk of the 50S ribosomal subunit. Forms a multimeric L10(L12)X complex, where L10 forms an elongated spine to which 2 to 4 L12 dimers bind in a sequential fashion. Binds GTP-bound translation factors.

Its function is as follows. Forms part of the ribosomal stalk which helps the ribosome interact with GTP-bound translation factors. Is thus essential for accurate translation. This Chlorobaculum tepidum (strain ATCC 49652 / DSM 12025 / NBRC 103806 / TLS) (Chlorobium tepidum) protein is Large ribosomal subunit protein bL12.